The chain runs to 687 residues: Outer dynein arm-docking complex subunit 1 (687 aa).

Coiled-coil stretches lie at residues Gln100–Val193, Arg222–Lys267, and Ile341–Arg421. The disordered stretch occupies residues Ser126–Lys147. 3 disordered regions span residues Val363 to Asp388, Phe487 to Asp511, and Glu540 to Tyr687. Residues Arg366–Asp388 are compositionally biased toward basic and acidic residues. A compositionally biased stretch (low complexity) spans Ser544–Ser556. Composition is skewed to polar residues over residues Arg557–Gly611 and Arg620–Gly629. A compositionally biased stretch (low complexity) spans Ser660–Ser680.

This sequence belongs to the ODA1/DCC2 family. As to quaternary structure, component of the outer dynein arm-docking complex along with ODAD2, ODAD3, ODAD4 and CLXN. Interacts with ODAD3. Interacts with ODAD4; this interaction may facilitate the recruitment and/or attachment of outer dynein arm docking complex proteins, including ODAD1, ODAD3, and ODAD4 to ciliary axonemes. Interacts with DNAH9. Interacts with MNS1. Interacts with PIERCE1 and PIERCE2; the interactions link the outer dynein arms docking complex (ODA-DC) to the internal microtubule inner proteins (MIP) in cilium axoneme. In terms of tissue distribution, expressed in trachea multiciliated cells.

Its subcellular location is the cytoplasm. It localises to the cytoskeleton. The protein resides in the cilium axoneme. Functionally, component of the outer dynein arm-docking complex (ODA-DC) that mediates outer dynein arms (ODA) binding onto the doublet microtubule. Involved in mediating assembly of both ODAs and their axonemal docking complex onto ciliary microtubules. This is Outer dynein arm-docking complex subunit 1 (ODAD1) from Bos taurus (Bovine).